Reading from the N-terminus, the 121-residue chain is Large ribosomal subunit protein uL18 (121 aa).

Belongs to the universal ribosomal protein uL18 family. As to quaternary structure, part of the 50S ribosomal subunit; part of the 5S rRNA/L5/L18/L25 subcomplex. Contacts the 5S and 23S rRNAs.

This is one of the proteins that bind and probably mediate the attachment of the 5S RNA into the large ribosomal subunit, where it forms part of the central protuberance. This chain is Large ribosomal subunit protein uL18, found in Burkholderia multivorans (strain ATCC 17616 / 249).